The sequence spans 653 residues: 2-oxoglutarate oxidoreductase subunit KorA (653 aa).

Residues methionine 1 to proline 21 are disordered. Residues glutamate 11–proline 21 are compositionally biased toward basic and acidic residues.

As to quaternary structure, KG oxidoreductase (KOR) is composed of KorA and KorB subunits.

The catalysed reaction is 2 oxidized [2Fe-2S]-[ferredoxin] + 2-oxoglutarate + CoA = succinyl-CoA + 2 reduced [2Fe-2S]-[ferredoxin] + CO2 + H(+). It participates in carbohydrate metabolism; tricarboxylic acid cycle. Its function is as follows. Component of KG oxidoreductase (KOR) that catalyzes the CoA-dependent oxidative decarboxylation of 2-oxoglutarate (alpha-ketoglutarate, KG) to succinyl-CoA. Methyl viologen can act as electron acceptor in vitro; the physiologic electron acceptor is unknown. Is involved in the alternative TCA pathway that functions concurrently with fatty acid beta-oxidation. Since a growing body of evidence indicates that lipids (for example cholesterol and fatty acids) are a predominant growth substrate for M.tuberculosis during infection, flux through KOR likely represents an important step in intermediary metabolism in vivo. KOR-dependent decarboxylation of KG also appears to be an important source of CO(2) in M.tuberculosis metabolism. The polypeptide is 2-oxoglutarate oxidoreductase subunit KorA (korA) (Mycobacterium tuberculosis (strain ATCC 25618 / H37Rv)).